The primary structure comprises 250 residues: 1-(5-phosphoribosyl)-5-[(5-phosphoribosylamino)methylideneamino] imidazole-4-carboxamide isomerase (250 aa).

The active-site Proton acceptor is the D8. D129 serves as the catalytic Proton donor.

Belongs to the HisA/HisF family.

Its subcellular location is the cytoplasm. The enzyme catalyses 1-(5-phospho-beta-D-ribosyl)-5-[(5-phospho-beta-D-ribosylamino)methylideneamino]imidazole-4-carboxamide = 5-[(5-phospho-1-deoxy-D-ribulos-1-ylimino)methylamino]-1-(5-phospho-beta-D-ribosyl)imidazole-4-carboxamide. Its pathway is amino-acid biosynthesis; L-histidine biosynthesis; L-histidine from 5-phospho-alpha-D-ribose 1-diphosphate: step 4/9. The polypeptide is 1-(5-phosphoribosyl)-5-[(5-phosphoribosylamino)methylideneamino] imidazole-4-carboxamide isomerase (Desulfovibrio desulfuricans (strain ATCC 27774 / DSM 6949 / MB)).